Consider the following 340-residue polypeptide: MEF2 transcription factor homolog (340 aa).

An MADS-box domain is found at 1-61; the sequence is MGRKKIQITR…NKLFQYASTD (61 aa). 4 disordered regions span residues 90-112, 193-217, 258-283, and 312-340; these read RKEG…TSPV, NQRN…LDFP, LQQR…NGTS, and PNTY…QQLT. Low complexity predominate over residues 200–211; sequence SSTSVAPSSSSS. Positions 258–268 are enriched in polar residues; it reads LQQRPVSQPAP. Residues 269 to 283 are compositionally biased toward low complexity; the sequence is SISNSSTNGISNGTS. Residues 318–332 are compositionally biased toward basic and acidic residues; it reads MEPHSPPEKRPRITT.

Belongs to the MEF2 family. Interacts with histone deacetylase hda-4 isoform b.

Its subcellular location is the nucleus. Transcription regulator. Binds specifically to the MEF2 element, 5'-[TC]TA[AT][AT][AT][AT]TA[AG]-3' in the regulatory elements of target genes, such as chemoreceptors str-1 and srh-234. Involved in transduction of sensory signals, together with egl-4, kin-29 and hda-4; binding to histone deacetylase hda-4 enables negative modulation of chemoreceptor gene expression in chemosensory neurons. In response to starvation, negatively modulates expression of chemoreceptor srh-234 in ADL sensory neurons, acting in concert with basic helix-loop-helix (bHLH) transcription factors. Plays a role in regulating muscle sensitivity to acetylcholine (ACh) and the magnitude of presynaptic ACh release via a retrograde signal, perhaps by indirectly decreasing Ras-related protein Rab-3 activity. The polypeptide is MEF2 transcription factor homolog (Caenorhabditis elegans).